Here is a 400-residue protein sequence, read N- to C-terminus: Argininosuccinate synthase (400 aa).

8-16 contributes to the ATP binding site; it reads AYSGGLDTS. L-citrulline is bound at residue Y85. G115 lines the ATP pocket. L-aspartate is bound by residues T117, N121, and D122. Residue N121 coordinates L-citrulline. L-citrulline-binding residues include R125, S173, E258, and Y270.

It belongs to the argininosuccinate synthase family. Type 1 subfamily. In terms of assembly, homotetramer.

The protein resides in the cytoplasm. It catalyses the reaction L-citrulline + L-aspartate + ATP = 2-(N(omega)-L-arginino)succinate + AMP + diphosphate + H(+). Its pathway is amino-acid biosynthesis; L-arginine biosynthesis; L-arginine from L-ornithine and carbamoyl phosphate: step 2/3. This chain is Argininosuccinate synthase, found in Staphylococcus haemolyticus (strain JCSC1435).